A 188-amino-acid polypeptide reads, in one-letter code: NADH-quinone oxidoreductase subunit I 2 (188 aa).

4Fe-4S ferredoxin-type domains are found at residues 56-88 (HFLK…VVPY) and 98-127 (AKFE…LGQQ). [4Fe-4S] cluster is bound by residues C68, C71, C74, C78, C107, C110, C113, and C117.

Belongs to the complex I 23 kDa subunit family. NDH-1 is composed of 14 different subunits. Subunits NuoA, H, J, K, L, M, N constitute the membrane sector of the complex. [4Fe-4S] cluster serves as cofactor.

It localises to the cell inner membrane. It carries out the reaction a quinone + NADH + 5 H(+)(in) = a quinol + NAD(+) + 4 H(+)(out). Functionally, NDH-1 shuttles electrons from NADH, via FMN and iron-sulfur (Fe-S) centers, to quinones in the respiratory chain. The immediate electron acceptor for the enzyme in this species is believed to be ubiquinone. Couples the redox reaction to proton translocation (for every two electrons transferred, four hydrogen ions are translocated across the cytoplasmic membrane), and thus conserves the redox energy in a proton gradient. The polypeptide is NADH-quinone oxidoreductase subunit I 2 (Rhizobium meliloti (strain 1021) (Ensifer meliloti)).